Reading from the N-terminus, the 282-residue chain is Probable phosphatase C1620.13 (282 aa).

Residue histidine 61 is the Tele-phosphohistidine intermediate of the active site. The active-site Proton donor/acceptor is the glutamate 135.

The protein belongs to the phosphoglycerate mutase family. BPG-dependent PGAM subfamily.

It localises to the nucleus. In Schizosaccharomyces pombe (strain 972 / ATCC 24843) (Fission yeast), this protein is Probable phosphatase C1620.13.